The sequence spans 1073 residues: Probable inorganic carbon transporter subunit DabA (1073 aa).

Zn(2+) contacts are provided by Cys-551, Asp-553, His-742, and Cys-757.

Belongs to the inorganic carbon transporter (TC 9.A.2) DabA family. Forms a complex with DabB. It depends on Zn(2+) as a cofactor.

The protein localises to the cell inner membrane. Its function is as follows. Part of an energy-coupled inorganic carbon pump. This is Probable inorganic carbon transporter subunit DabA from Methylococcus capsulatus (strain ATCC 33009 / NCIMB 11132 / Bath).